Here is a 136-residue protein sequence, read N- to C-terminus: uncharacterized protein (136 aa).

The helical transmembrane segment at A14–F34 threads the bilayer.

The protein localises to the membrane. This is an uncharacterized protein from Mycoplasma genitalium (strain ATCC 33530 / DSM 19775 / NCTC 10195 / G37) (Mycoplasmoides genitalium).